A 262-amino-acid polypeptide reads, in one-letter code: Acyl-coenzyme A diphosphatase FITM2 (262 aa).

Residues 1–23 lie on the Cytoplasmic side of the membrane; the sequence is MEHLERCAWVLRGTLVRAAVRRY. The chain crosses the membrane as a helical span at residues 24–44; it reads LPWALAASMLAGSLLKELSPL. The Lumenal portion of the chain corresponds to 45–57; it reads PESYLSNKRNVLN. The helical transmembrane segment at 58–78 threads the bilayer; that stretch reads VYFVKVAWAWTFCLLLPFIAL. At 79–93 the chain is on the cytoplasmic side; it reads TNYHLTGKAGLVLRR. Residues 94–114 traverse the membrane as a helical segment; that stretch reads LSTLLVGTAIWYVCTAIFSNV. Over 115-145 the chain is Lumenal; that stretch reads EHYTGSCYQSPALEGVRNEPLSKQQCHGQGG. A helical transmembrane segment spans residues 146–166; sequence FWHGFDISGHSFLLTFCALMI. Residue H155 is part of the active site. Residues 167–185 are Cytoplasmic-facing; sequence VEEMAVLHEVKTDRSHCLH. A helical transmembrane segment spans residues 186 to 206; it reads VAITALVVALGFLTFIWVWMF. Residues 207–218 lie on the Lumenal side of the membrane; the sequence is LCTAVYFHNLSQ. The active site involves H214. The chain crosses the membrane as a helical span at residues 219–239; the sequence is KVFGTLFGLLGWYGTYGFWYL. The Cytoplasmic portion of the chain corresponds to 240-262; sequence KSFSPGLPPQSCSSNLKQDSYKR.

The protein belongs to the FIT family. FIT2 subfamily.

It localises to the endoplasmic reticulum membrane. The catalysed reaction is an acyl-CoA + H2O = an acyl-4'-phosphopantetheine + adenosine 3',5'-bisphosphate + 2 H(+). The enzyme catalyses (9Z)-octadecenoyl-CoA + H2O = S-(9Z-octadecenoyl)-4'-phosphopantetheine + adenosine 3',5'-bisphosphate + 2 H(+). It catalyses the reaction (5Z,8Z,11Z,14Z)-eicosatetraenoyl-CoA + H2O = S-(5Z,8Z,11Z,14Z-eicosatetraenoyl)-4'-phosphopantetheine + adenosine 3',5'-bisphosphate + 2 H(+). It carries out the reaction hexadecanoyl-CoA + H2O = S-hexadecanoyl-4'-phosphopantetheine + adenosine 3',5'-bisphosphate + 2 H(+). Fatty acyl-coenzyme A (CoA) diphosphatase that hydrolyzes fatty acyl-CoA to yield acyl-4'-phosphopantetheine and adenosine 3',5'-bisphosphate. Preferentially hydrolyzes unsaturated long-chain acyl-CoA substrates such as oleoyl-CoA/(9Z)-octadecenoyl-CoA and arachidonoyl-CoA/(5Z,8Z,11Z,14Z)-eicosatetraenoyl-CoA in the endoplasmic reticulum (ER) lumen. This catalytic activity is required for maintaining ER structure and for lipid droplets (LDs) biogenesis, which are lipid storage organelles involved in maintaining lipid and energy homeostasis. Directly binds to diacylglycerol (DAGs) and triacylglycerol, which is also important for LD biogenesis. May support directional budding of nacent LDs from the ER into the cytosol by reducing DAG levels at sites of LD formation. Plays a role in the regulation of cell morphology and cytoskeletal organization. The chain is Acyl-coenzyme A diphosphatase FITM2 from Sus scrofa (Pig).